We begin with the raw amino-acid sequence, 549 residues long: MSPKLSPPNIGEVLARQAEDIDTRYHPSAALRRQLNKVFPTHWSFLLGEIALYSFVVLLITGVYLTLFFDPSMVDVTYNGVYQPLRGVEMSRAYQSALDISFEVRGGLFVRQIHHWAALMFAAAIMVHLARIFFTGAFRRPRETNWVIGSLLLILAMFEGYFGYSLPDDLLSGLGLRAALSSITLGMPVIGTWLHWALFGGDFPGTILIPRLYALHILLLPGIILALIGLHLALVWFQKHTQFPGPGRTEHNVVGVRVMPVFAFKSGAFFAAIVGVLGLMGGLLQINPIWNLGPYKPSQVSAGSQPDFYMMWTEGLARIWPPWEFYFWHHTIPAPVWVAVIMGLVFVLLPAYPFLEKRFTGDYAHHNLLQRPRDVPVRTAIGAMAIAFYMVLTLAAMNDIIALKFHISLNATTWIGRIGMVILPPFVYFITYRWCIGLQRSDRSVLEHGVETGIIKRLPHGAYIELHQPLGPVDEHGHPIPLQYQGAPLPKRMNKLGSAGSPGSGSFLFADSAAEDAALREAGHAAEQRALAALREHQDSIMGSPDGEH.

The chain crosses the membrane as a helical span at residues 45 to 65 (FLLGEIALYSFVVLLITGVYL). 2 residues coordinate heme: His114 and His128. Helical transmembrane passes span 118–138 (ALMF…TGAF), 146–166 (WVIG…GYSL), and 189–209 (VIGT…TILI). 2 residues coordinate heme: His216 and His231. 5 helical membrane-spanning segments follow: residues 217-237 (ILLL…LVWF), 266-286 (SGAF…LLQI), 335-355 (PVWV…YPFL), 381-401 (IGAM…NDII), and 418-438 (IGMV…CIGL).

It belongs to the cytochrome b family. In terms of assembly, the cytochrome bc1 complex is composed of a cytochrome b (QcrB), the Rieske iron-sulfur protein (QcrA) and a diheme cytochrome c (QcrC) subunit. Heme serves as cofactor.

Its subcellular location is the cell membrane. The enzyme catalyses a quinol + 2 Fe(III)-[cytochrome c](out) = a quinone + 2 Fe(II)-[cytochrome c](out) + 2 H(+)(out). Cytochrome b subunit of the cytochrome bc1 complex, an essential component of the respiratory electron transport chain required for ATP synthesis. The bc1 complex catalyzes the oxidation of ubiquinol and the reduction of cytochrome c in the respiratory chain. The bc1 complex operates through a Q-cycle mechanism that couples electron transfer to generation of the proton gradient that drives ATP synthesis. The cytochrome b subunit contains two ubiquinol reactive sites: the oxidation (QP) site and the reduction (QN) site. In Mycobacterium bovis (strain ATCC BAA-935 / AF2122/97), this protein is Cytochrome bc1 complex cytochrome b subunit (qcrB).